Consider the following 408-residue polypeptide: Serine/threonine-protein kinase UCNL (408 aa).

A Protein kinase domain is found at 21 to 341; it reads IKALKILGKG…AAEIKELAFF (321 aa). Residues 27 to 35 and Lys54 each bind ATP; that span reads LGKGATGTV. Catalysis depends on Asp152, which acts as the Proton acceptor. The 67-residue stretch at 342-408 folds into the AGC-kinase C-terminal domain; the sequence is AGVRWDLLTE…CRKNDPFIEF (67 aa).

The protein belongs to the protein kinase superfamily. AGC Ser/Thr protein kinase family. In terms of tissue distribution, expressed in the epidermis and cortex of the transition zone of the root apex. Expressed in rosette leaves, stems, flowers and siliques.

It is found in the cytoplasm. Its subcellular location is the nucleus. The enzyme catalyses L-seryl-[protein] + ATP = O-phospho-L-seryl-[protein] + ADP + H(+). It catalyses the reaction L-threonyl-[protein] + ATP = O-phospho-L-threonyl-[protein] + ADP + H(+). Regulates planar ovule integument development. This chain is Serine/threonine-protein kinase UCNL, found in Arabidopsis thaliana (Mouse-ear cress).